The following is a 636-amino-acid chain: DNA ligase (636 aa).

Catalysis depends on K113, which acts as the N6-AMP-lysine intermediate. The 77-residue stretch at 560 to 636 (NSEGIFQNQT…KSSFSKKFEK (77 aa)) folds into the BRCT domain.

Belongs to the NAD-dependent DNA ligase family.

The catalysed reaction is NAD(+) + (deoxyribonucleotide)n-3'-hydroxyl + 5'-phospho-(deoxyribonucleotide)m = (deoxyribonucleotide)n+m + AMP + beta-nicotinamide D-nucleotide.. Catalyzes the formation of phosphodiester linkages between 5'-phosphoryl and 3'-hydroxyl groups in double-stranded DNA using NAD as a coenzyme and as the energy source for the reaction. This Acanthamoeba polyphaga (Amoeba) protein is DNA ligase.